The following is a 103-amino-acid chain: Cytochrome c-552 (103 aa).

The first 22 residues, 1–22, serve as a signal peptide directing secretion; sequence MKTAWLGTFAASALLVAGYAQA. Residues cysteine 32, cysteine 35, histidine 36, and methionine 81 each coordinate heme c.

As to quaternary structure, monomer. In terms of processing, binds 1 heme c group covalently per subunit.

It is found in the periplasm. In terms of biological role, monoheme c-type cytochrome. Probable electron donor to membrane cytochrome oxidase and to periplasmic nitrite reductase. The polypeptide is Cytochrome c-552 (cyt) (Nitrosomonas europaea (strain ATCC 19718 / CIP 103999 / KCTC 2705 / NBRC 14298)).